Consider the following 302-residue polypeptide: Putative 2-dehydro-3-deoxy-D-gluconate aldolase YagE (302 aa).

Active-site charge relay system residues include S49 and Y112. Y138 functions as the Proton donor in the catalytic mechanism. K167 functions as the Schiff-base intermediate with substrate in the catalytic mechanism.

Belongs to the DapA family. A dimer of dimers.

The protein localises to the cytoplasm. It catalyses the reaction 2-dehydro-3-deoxy-D-gluconate = D-glyceraldehyde + pyruvate. It carries out the reaction 2-dehydro-3-deoxy-D-arabinonate = glycolaldehyde + pyruvate. Functionally, catalyzes the formation of 2-keto-3-deoxy-gluconate (KDG) from pyruvate and glyceraldehyde. May also function as a 2-dehydro-3-deoxy-D-pentonate aldolase. Overexpression leads to increased growth (over 2 hours) in the presence of the antibiotics norfloxacin, ampicillin and streptomycin. The chain is Putative 2-dehydro-3-deoxy-D-gluconate aldolase YagE (yagE) from Escherichia coli (strain K12).